We begin with the raw amino-acid sequence, 1210 residues long: Adenine-specific methyltransferase PglX (1210 aa).

Basic and acidic residues predominate over residues 1181 to 1194 (KQGEHGLTDDDLRG). The interval 1181–1210 (KQGEHGLTDDDLRGWRPPAATRRRRAAAKQ) is disordered. A compositionally biased stretch (basic residues) spans 1201 to 1210 (TRRRRAAAKQ).

This sequence belongs to the methyltransferase superfamily. PglX adenine methyltransferase family.

The enzyme catalyses a 2'-deoxyadenosine in DNA + S-adenosyl-L-methionine = an N(6)-methyl-2'-deoxyadenosine in DNA + S-adenosyl-L-homocysteine + H(+). Functionally, BREX systems (bacteriophage exclusion) provide immunity against bacteriophage. Part of a type 2 BREX system. Probably a DNA methyltransferase, it methylates phage DNA in vitro in an S-adenosyl-L-methionine-dependent manner. Previously called the phage growth limitation (Pgl) system, it confers protection against bacteriophage phiC31. The bacteria allows one cycle of phage infection, but subsequent cycles are impaired, protecting the original bacterial colony. The system undergoes high rates (10(-3) to 10(-4)) of phase reversion, i.e. loss and regain of phiC31 resistance. When the pglW-pglX-pglY-pglZ genes are transformed into a susceptible S.lividans (strain 1326) they confer resistance to infection by phage phiC31 and phiBT1; all 4 genes are necessary. Its function is as follows. Probably a toxic component of a type II toxin-antitoxin (TA) system. The toxic activity is inhibited by its cognate antitoxin PglZ. May be a subtypes G and alpha restriction enzyme that recognizes and cleaves an unknown sequence. Methylates an adenine residue in the same sequence. The chain is Adenine-specific methyltransferase PglX from Streptomyces coelicolor (strain ATCC BAA-471 / A3(2) / M145).